A 130-amino-acid chain; its full sequence is Small ribosomal subunit protein uS9 (130 aa).

It belongs to the universal ribosomal protein uS9 family.

The polypeptide is Small ribosomal subunit protein uS9 (Streptococcus uberis (strain ATCC BAA-854 / 0140J)).